The chain runs to 77 residues: Apelin (77 aa).

Residues methionine 1–glycine 22 form the signal peptide. The propeptide occupies glycine 23 to histidine 41. The disordered stretch occupies residues valine 43–phenylalanine 77. Basic residues predominate over residues glycine 58–histidine 71.

This sequence belongs to the apelin family. In terms of processing, several active peptides may be produced by proteolytic processing of the peptide precursor. In terms of tissue distribution, expressed in the brain with highest levels in the frontal cortex, thalamus, hypothalamus and midbrain. Secreted by the mammary gland into the colostrum and the milk.

It is found in the secreted. The protein localises to the extracellular space. In terms of biological role, peptide hormone that functions as endogenous ligand for the G-protein-coupled apelin receptor (APLNR/APJ), that plays a role in cadiovascular homeostasis. Functions as a balanced agonist activating both G(i) protein pathway and beta-arrestin pathway of APLNR. Downstream G proteins activation, apelin can inhibit cAMP production and activate key intracellular effectors such as ERKs. On the other hand, APLNR activation induces beta-arrestin recruitment to the membrane leading to desensitization and internalization of the receptor. Apelin blunts cardiac hypertrophic induction from APLNR on response to pathological stimuli, but also induces myocardial hypertrophy under normal conditions. Apelin-36 dissociates more hardly than (pyroglu)apelin-13 from APLNR. Involved in the regulation of cardiac precursor cell movements during gastrulation and heart morphogenesis. Has an inhibitory effect on cytokine production in response to T-cell receptor/CD3 cross-linking; the oral intake of apelin in the colostrum and the milk might therefore modulate immune responses in neonates. Plays a role in early coronary blood vessels formation. Mediates myocardial contractility in an ERK1/2-dependent manner. May also have a role in the central control of body fluid homeostasis by influencing vasopressin release and drinking behavior. Functionally, (Microbial infection) Endogenous ligand for the apelin receptor (APLNR), an alternative coreceptor with CD4 for HIV-1 infection. Inhibits HIV-1 entry in cells coexpressing CD4 and APLNR. Apelin-36 has a greater inhibitory activity on HIV infection than other synthetic apelin derivatives. This Homo sapiens (Human) protein is Apelin.